The primary structure comprises 220 residues: uncharacterized protein (220 aa).

Residues 20-42 (FFKKLVPIIIIISIVVITIMVII) traverse the membrane as a helical segment.

The protein resides in the membrane. This is an uncharacterized protein from Rickettsia prowazekii (strain Madrid E).